Consider the following 367-residue polypeptide: Protein RecA (367 aa).

73 to 80 lines the ATP pocket; sequence GPESSGKT.

The protein belongs to the RecA family.

Its subcellular location is the cytoplasm. Functionally, can catalyze the hydrolysis of ATP in the presence of single-stranded DNA, the ATP-dependent uptake of single-stranded DNA by duplex DNA, and the ATP-dependent hybridization of homologous single-stranded DNAs. It interacts with LexA causing its activation and leading to its autocatalytic cleavage. This Delftia acidovorans (strain DSM 14801 / SPH-1) protein is Protein RecA.